Reading from the N-terminus, the 1032-residue chain is Vacuolar membrane protease (1032 aa).

The Cytoplasmic segment spans residues 1-11 (MRFQNPFAFRP). Residues 12–32 (GPVSFWTTVIYLALVIPLIYV) traverse the membrane as a helical segment. The Vacuolar segment spans residues 33 to 426 (HETVPPAPSD…AWAVFALRGL (394 aa)). Residues Asn50 and Asn142 are each glycosylated (N-linked (GlcNAc...) asparagine). Positions 207 and 219 each coordinate Zn(2+). Residue Glu253 is the Proton acceptor of the active site. 3 residues coordinate Zn(2+): Glu254, Glu279, and His352. A helical transmembrane segment spans residues 427 to 447 (FAWSLTLLVATPLILVAITYI). The Cytoplasmic segment spans residues 448–482 (LARKDKYYFFSRDIKMHHDINDDPVVLGGWKGFLR). Residues 483–503 (FPFALVFAGALTIASTLLLAK) form a helical membrane-spanning segment. At 504-511 (FNPLIIYS) the chain is on the vacuolar side. Residues 512 to 532 (SPYAVWSMTLSIFYFSFWLIM) form a helical membrane-spanning segment. Residues 533 to 545 (RGASFIRPSALHR) lie on the Cytoplasmic side of the membrane. A helical transmembrane segment spans residues 546-566 (GYVLIWLFALGWGLQVVGAVA). Residues 567–573 (EDRLHIA) lie on the Vacuolar side of the membrane. The helical transmembrane segment at 574 to 594 (ALYATVFLQSAVFLALFISLL) threads the bilayer. Topologically, residues 595–708 (EQFALLGKHD…WSGRLPSWTW (114 aa)) are cytoplasmic. Residues 616-631 (RDISSHGTDHESRPQP) are compositionally biased toward basic and acidic residues. The tract at residues 616–666 (RDISSHGTDHESRPQPEEEPAQPEGDEDESEDATETTPLRANEPGYGSSTR) is disordered. Over residues 632–649 (EEEPAQPEGDEDESEDAT) the composition is skewed to acidic residues. The chain crosses the membrane as a helical span at residues 709–729 (IIQFLLLAPVPVILFGNLGLV). The Vacuolar portion of the chain corresponds to 730 to 745 (AMSALQMTGTDGGSLL). The helical transmembrane segment at 746–766 (VPVLTLGIVSIFLLLPLTPFI) threads the bilayer. At 767–773 (HRVSHHV) the chain is on the cytoplasmic side. Residues 774 to 794 (PMFLLCVFAGTFIYNLVAFPF) traverse the membrane as a helical segment. The Vacuolar segment spans residues 795–1032 (SDSHRFKFYF…LVEVRKTYKV (238 aa)). N-linked (GlcNAc...) asparagine glycans are attached at residues Asn812 and Asn884.

The protein belongs to the peptidase M28 family. Zn(2+) serves as cofactor.

The protein resides in the vacuole membrane. May be involved in vacuolar sorting and osmoregulation. In Fusarium vanettenii (strain ATCC MYA-4622 / CBS 123669 / FGSC 9596 / NRRL 45880 / 77-13-4) (Fusarium solani subsp. pisi), this protein is Vacuolar membrane protease.